Consider the following 76-residue polypeptide: Putative protein StbC (76 aa).

This Escherichia coli protein is Putative protein StbC (stbC).